The primary structure comprises 200 residues: Recombination protein RecR (200 aa).

Residues 58–75 (CSTCFCLKNLPESNCEFC) form a C4-type zinc finger. The Toprim domain occupies 82–177 (STLCIVATPK…SISRLALGLP (96 aa)).

This sequence belongs to the RecR family.

May play a role in DNA repair. It seems to be involved in an RecBC-independent recombinational process of DNA repair. It may act with RecF and RecO. This is Recombination protein RecR from Chlamydia caviae (strain ATCC VR-813 / DSM 19441 / 03DC25 / GPIC) (Chlamydophila caviae).